We begin with the raw amino-acid sequence, 149 residues long: Nucleoside diphosphate kinase (149 aa).

ATP-binding residues include K9, F57, R85, T91, R102, and N112. H115 (pros-phosphohistidine intermediate) is an active-site residue.

Belongs to the NDK family. The cofactor is Mg(2+).

Its subcellular location is the cytoplasm. The catalysed reaction is a 2'-deoxyribonucleoside 5'-diphosphate + ATP = a 2'-deoxyribonucleoside 5'-triphosphate + ADP. It carries out the reaction a ribonucleoside 5'-diphosphate + ATP = a ribonucleoside 5'-triphosphate + ADP. Major role in the synthesis of nucleoside triphosphates other than ATP. The ATP gamma phosphate is transferred to the NDP beta phosphate via a ping-pong mechanism, using a phosphorylated active-site intermediate. In Methanosarcina mazei (strain ATCC BAA-159 / DSM 3647 / Goe1 / Go1 / JCM 11833 / OCM 88) (Methanosarcina frisia), this protein is Nucleoside diphosphate kinase.